We begin with the raw amino-acid sequence, 201 residues long: Large ribosomal subunit protein uL4 (201 aa).

The tract at residues K44–G66 is disordered. Residues G55–G66 are compositionally biased toward basic residues.

It belongs to the universal ribosomal protein uL4 family. In terms of assembly, part of the 50S ribosomal subunit.

In terms of biological role, one of the primary rRNA binding proteins, this protein initially binds near the 5'-end of the 23S rRNA. It is important during the early stages of 50S assembly. It makes multiple contacts with different domains of the 23S rRNA in the assembled 50S subunit and ribosome. Functionally, forms part of the polypeptide exit tunnel. This is Large ribosomal subunit protein uL4 from Alteromonas mediterranea (strain DSM 17117 / CIP 110805 / LMG 28347 / Deep ecotype).